The sequence spans 819 residues: Leucine--tRNA ligase (819 aa).

Residues 40 to 51 (PYPSGAGLHVGH) carry the 'HIGH' region motif. The 'KMSKS' region signature appears at 600 to 604 (KMSKS). Lys603 provides a ligand contact to ATP.

It belongs to the class-I aminoacyl-tRNA synthetase family.

It localises to the cytoplasm. The catalysed reaction is tRNA(Leu) + L-leucine + ATP = L-leucyl-tRNA(Leu) + AMP + diphosphate. This Chlamydia trachomatis serovar D (strain ATCC VR-885 / DSM 19411 / UW-3/Cx) protein is Leucine--tRNA ligase.